An 89-amino-acid chain; its full sequence is Small ribosomal subunit protein uS15 (89 aa).

Belongs to the universal ribosomal protein uS15 family. As to quaternary structure, part of the 30S ribosomal subunit. Forms a bridge to the 50S subunit in the 70S ribosome, contacting the 23S rRNA.

Its function is as follows. One of the primary rRNA binding proteins, it binds directly to 16S rRNA where it helps nucleate assembly of the platform of the 30S subunit by binding and bridging several RNA helices of the 16S rRNA. In terms of biological role, forms an intersubunit bridge (bridge B4) with the 23S rRNA of the 50S subunit in the ribosome. In Solibacter usitatus (strain Ellin6076), this protein is Small ribosomal subunit protein uS15.